A 92-amino-acid polypeptide reads, in one-letter code: Small ribosomal subunit protein uS19 (92 aa).

This sequence belongs to the universal ribosomal protein uS19 family.

Functionally, protein S19 forms a complex with S13 that binds strongly to the 16S ribosomal RNA. In Agrobacterium fabrum (strain C58 / ATCC 33970) (Agrobacterium tumefaciens (strain C58)), this protein is Small ribosomal subunit protein uS19.